The following is a 691-amino-acid chain: Elongation factor G (691 aa).

One can recognise a tr-type G domain in the interval 8–282 (ERVRNIGIAA…AVVNYLPAPV (275 aa)). Residues 17 to 24 (AHIDAGKT), 81 to 85 (DTPGH), and 135 to 138 (NKMD) contribute to the GTP site.

This sequence belongs to the TRAFAC class translation factor GTPase superfamily. Classic translation factor GTPase family. EF-G/EF-2 subfamily.

It localises to the cytoplasm. In terms of biological role, catalyzes the GTP-dependent ribosomal translocation step during translation elongation. During this step, the ribosome changes from the pre-translocational (PRE) to the post-translocational (POST) state as the newly formed A-site-bound peptidyl-tRNA and P-site-bound deacylated tRNA move to the P and E sites, respectively. Catalyzes the coordinated movement of the two tRNA molecules, the mRNA and conformational changes in the ribosome. The polypeptide is Elongation factor G (Prochlorococcus marinus (strain NATL2A)).